The chain runs to 275 residues: MTELQQIIEAAFERRDSITPGSVDAATKAAILQAIDLLDSGKARVAEKIAGEWVVHQWLKKAVLLYFRINDNGIIKGDDAQYYDKVPLKFSDYSAEQFKAAGVRVVPPATARKGSFIAPNTVLMPSYVNIGAFVDEGTMVDTWATVGSCAQIGKNVHLSGGVGIGGVLEPLQANPTIIEDNCFIGARSEVVEGVIVEEGSVISMGVFIGQSTRIYDRETGEIHYGRVPAGSVVVSGSLPSKCGKYSLYAAVIVKKVDAKTRAKVGINALLRSIDE.

Substrate is bound by residues arginine 104 and aspartate 141.

Belongs to the transferase hexapeptide repeat family. Homotrimer.

It is found in the cytoplasm. The catalysed reaction is (S)-2,3,4,5-tetrahydrodipicolinate + succinyl-CoA + H2O = (S)-2-succinylamino-6-oxoheptanedioate + CoA. Its pathway is amino-acid biosynthesis; L-lysine biosynthesis via DAP pathway; LL-2,6-diaminopimelate from (S)-tetrahydrodipicolinate (succinylase route): step 1/3. This chain is 2,3,4,5-tetrahydropyridine-2,6-dicarboxylate N-succinyltransferase, found in Aeromonas hydrophila subsp. hydrophila (strain ATCC 7966 / DSM 30187 / BCRC 13018 / CCUG 14551 / JCM 1027 / KCTC 2358 / NCIMB 9240 / NCTC 8049).